The chain runs to 369 residues: GTPase Obg (369 aa).

Residues 1–159 (MKFIDEAKIE…RELRLELKVL (159 aa)) enclose the Obg domain. The segment at 128–148 (IHFKSSTNRAPRQKSEGKEGE) is disordered. The OBG-type G domain maps to 160-333 (ADIGLLGMPN…LVTEIYEYIA (174 aa)). GTP is bound by residues 166–173 (GMPNAGKS), 191–195 (FTTLH), 213–216 (DIPG), 283–286 (NKLD), and 314–316 (SAL). Residues Ser-173 and Thr-193 each coordinate Mg(2+).

Belongs to the TRAFAC class OBG-HflX-like GTPase superfamily. OBG GTPase family. As to quaternary structure, monomer. Mg(2+) is required as a cofactor.

It localises to the cytoplasm. Functionally, an essential GTPase which binds GTP, GDP and possibly (p)ppGpp with moderate affinity, with high nucleotide exchange rates and a fairly low GTP hydrolysis rate. Plays a role in control of the cell cycle, stress response, ribosome biogenesis and in those bacteria that undergo differentiation, in morphogenesis control. This chain is GTPase Obg, found in Janthinobacterium sp. (strain Marseille) (Minibacterium massiliensis).